The chain runs to 746 residues: Protein psiN (746 aa).

Residues 1–23 (MGNINKKLFYFLIQLITILIVLS) form the signal peptide. Over 24–679 (DDSYNSLLPL…KCQSAAVKAA (656 aa)) the chain is Extracellular. N-linked (GlcNAc...) asparagine glycans are attached at residues Asn-97 and Asn-124. The PA14 domain occupies 125 to 276 (VTSDDPRIYS…YDYCGVCEGM (152 aa)). 7 N-linked (GlcNAc...) asparagine glycosylation sites follow: Asn-319, Asn-353, Asn-380, Asn-477, Asn-553, Asn-628, and Asn-654. A helical transmembrane segment spans residues 680–700 (VGVGAGAAAGIAIGGAIALGL). Over 701–746 (AAFGGKRGYDAWKSSRDNQIQTSSENPLYNPNPNQGDNPLYAANNS) the chain is Cytoplasmic. The tract at residues 714-746 (SSRDNQIQTSSENPLYNPNPNQGDNPLYAANNS) is disordered. Polar residues predominate over residues 717–746 (DNQIQTSSENPLYNPNPNQGDNPLYAANNS).

Belongs to the prespore-cell-inducing factor family.

It is found in the membrane. The sequence is that of Protein psiN (psiN) from Dictyostelium discoideum (Social amoeba).